The sequence spans 284 residues: D-tagatose-1,6-bisphosphate aldolase subunit GatY (284 aa).

Catalysis depends on Asp82, which acts as the Proton donor. Residues His83 and His180 each contribute to the Zn(2+) site. Gly181 serves as a coordination point for dihydroxyacetone phosphate. His208 contributes to the Zn(2+) binding site. Dihydroxyacetone phosphate-binding positions include Gly209–Ser211 and Asn230–Thr233.

It belongs to the class II fructose-bisphosphate aldolase family. TagBP aldolase GatY subfamily. In terms of assembly, forms a complex with GatZ. The cofactor is Zn(2+).

It carries out the reaction D-tagatofuranose 1,6-bisphosphate = D-glyceraldehyde 3-phosphate + dihydroxyacetone phosphate. The protein operates within carbohydrate metabolism; D-tagatose 6-phosphate degradation; D-glyceraldehyde 3-phosphate and glycerone phosphate from D-tagatose 6-phosphate: step 2/2. Catalytic subunit of the tagatose-1,6-bisphosphate aldolase GatYZ, which catalyzes the reversible aldol condensation of dihydroxyacetone phosphate (DHAP or glycerone-phosphate) with glyceraldehyde 3-phosphate (G3P) to produce tagatose 1,6-bisphosphate (TBP). Requires GatZ subunit for full activity and stability. Is involved in the catabolism of galactitol. This Shigella sonnei (strain Ss046) protein is D-tagatose-1,6-bisphosphate aldolase subunit GatY.